The chain runs to 345 residues: Phosphoribosylformylglycinamidine cyclo-ligase (345 aa).

Belongs to the AIR synthase family.

The protein resides in the cytoplasm. It carries out the reaction 2-formamido-N(1)-(5-O-phospho-beta-D-ribosyl)acetamidine + ATP = 5-amino-1-(5-phospho-beta-D-ribosyl)imidazole + ADP + phosphate + H(+). It participates in purine metabolism; IMP biosynthesis via de novo pathway; 5-amino-1-(5-phospho-D-ribosyl)imidazole from N(2)-formyl-N(1)-(5-phospho-D-ribosyl)glycinamide: step 2/2. This Escherichia coli (strain 55989 / EAEC) protein is Phosphoribosylformylglycinamidine cyclo-ligase.